A 263-amino-acid chain; its full sequence is Oxidoreductase UcpA (263 aa).

An NAD(+)-binding site is contributed by 10 to 32 (LITGALQGIGEGIARTFARHGAN). S141 lines the substrate pocket. Catalysis depends on Y155, which acts as the Proton acceptor.

Belongs to the short-chain dehydrogenases/reductases (SDR) family.

This is Oxidoreductase UcpA (ucpA) from Escherichia coli (strain K12).